Consider the following 397-residue polypeptide: CCA-adding enzyme (397 aa).

ATP is bound by residues glycine 27 and arginine 30. The CTP site is built by glycine 27 and arginine 30. Positions 40 and 42 each coordinate Mg(2+). Arginine 111, aspartate 154, arginine 157, arginine 160, and arginine 163 together coordinate ATP. The CTP site is built by arginine 111, aspartate 154, arginine 157, arginine 160, and arginine 163.

Belongs to the tRNA nucleotidyltransferase/poly(A) polymerase family. Bacterial CCA-adding enzyme type 3 subfamily. In terms of assembly, homodimer. The cofactor is Mg(2+).

It carries out the reaction a tRNA precursor + 2 CTP + ATP = a tRNA with a 3' CCA end + 3 diphosphate. The catalysed reaction is a tRNA with a 3' CCA end + 2 CTP + ATP = a tRNA with a 3' CCACCA end + 3 diphosphate. In terms of biological role, catalyzes the addition and repair of the essential 3'-terminal CCA sequence in tRNAs without using a nucleic acid template. Adds these three nucleotides in the order of C, C, and A to the tRNA nucleotide-73, using CTP and ATP as substrates and producing inorganic pyrophosphate. Has no poly(A) polymerase activity. The polypeptide is CCA-adding enzyme (Bacillus subtilis (strain 168)).